The chain runs to 111 residues: Large ribosomal subunit protein uL22 (111 aa).

It belongs to the universal ribosomal protein uL22 family. Part of the 50S ribosomal subunit.

In terms of biological role, this protein binds specifically to 23S rRNA; its binding is stimulated by other ribosomal proteins, e.g. L4, L17, and L20. It is important during the early stages of 50S assembly. It makes multiple contacts with different domains of the 23S rRNA in the assembled 50S subunit and ribosome. The globular domain of the protein is located near the polypeptide exit tunnel on the outside of the subunit, while an extended beta-hairpin is found that lines the wall of the exit tunnel in the center of the 70S ribosome. In Xylella fastidiosa (strain M23), this protein is Large ribosomal subunit protein uL22.